The sequence spans 100 residues: Bombyxin A-2 homolog (100 aa).

A signal peptide spans 1 to 18 (MRTQVLFLIVVLAVMASG). Intrachain disulfides connect Cys-26-Cys-85, Cys-38-Cys-98, and Cys-84-Cys-89. Positions 47-75 (PPYISSENEGYGWKWLERQRARQLDEARG) are cleaved as a propeptide — c peptide like.

Belongs to the insulin family. In terms of assembly, heterodimer of a B chain and an A chain linked by two disulfide bonds.

It localises to the secreted. Brain peptide responsible for activation of prothoracic glands to produce ecdysone in insects. The chain is Bombyxin A-2 homolog (SBXA2) from Samia cynthia (Ailanthus silkmoth).